The primary structure comprises 354 residues: Dihydroorotate dehydrogenase (quinone) (354 aa).

Residues 61–65 (AGYDK) and A85 contribute to the FMN site. K65 contributes to the substrate binding site. 110–114 (NRFGF) contributes to the substrate binding site. The FMN site is built by N139 and N170. N170 provides a ligand contact to substrate. The active-site Nucleophile is the S173. N175 serves as a coordination point for substrate. Positions 211 and 239 each coordinate FMN. Substrate is bound at residue 240 to 241 (NT). FMN-binding positions include G261, G290, and 311–312 (YT).

This sequence belongs to the dihydroorotate dehydrogenase family. Type 2 subfamily. As to quaternary structure, monomer. FMN is required as a cofactor.

The protein resides in the cell membrane. The catalysed reaction is (S)-dihydroorotate + a quinone = orotate + a quinol. It participates in pyrimidine metabolism; UMP biosynthesis via de novo pathway; orotate from (S)-dihydroorotate (quinone route): step 1/1. Catalyzes the conversion of dihydroorotate to orotate with quinone as electron acceptor. In Cereibacter sphaeroides (strain KD131 / KCTC 12085) (Rhodobacter sphaeroides), this protein is Dihydroorotate dehydrogenase (quinone).